Consider the following 114-residue polypeptide: Large ribosomal subunit protein bL19 (114 aa).

This sequence belongs to the bacterial ribosomal protein bL19 family.

Its function is as follows. This protein is located at the 30S-50S ribosomal subunit interface and may play a role in the structure and function of the aminoacyl-tRNA binding site. The polypeptide is Large ribosomal subunit protein bL19 (Listeria welshimeri serovar 6b (strain ATCC 35897 / DSM 20650 / CCUG 15529 / CIP 8149 / NCTC 11857 / SLCC 5334 / V8)).